The primary structure comprises 397 residues: Argininosuccinate synthase (397 aa).

7 to 15 (LYSGGLDTS) is a binding site for ATP. L-citrulline is bound at residue tyrosine 83. Glycine 113 lines the ATP pocket. L-aspartate-binding residues include threonine 115, asparagine 119, and aspartate 120. Asparagine 119 contacts L-citrulline. Residues arginine 123, serine 169, serine 178, glutamate 253, and tyrosine 265 each coordinate L-citrulline.

Belongs to the argininosuccinate synthase family. Type 1 subfamily. Homotetramer.

It is found in the cytoplasm. The catalysed reaction is L-citrulline + L-aspartate + ATP = 2-(N(omega)-L-arginino)succinate + AMP + diphosphate + H(+). Its pathway is amino-acid biosynthesis; L-arginine biosynthesis; L-arginine from L-ornithine and carbamoyl phosphate: step 2/3. This Thermoplasma volcanium (strain ATCC 51530 / DSM 4299 / JCM 9571 / NBRC 15438 / GSS1) protein is Argininosuccinate synthase.